The following is a 283-amino-acid chain: MRTQWPSPAKLNLFLYITGQRADGYHTLQTLFQFLDYGDTISIELRDDGDIRLLTPVEGVEHEDNLIVRAARLLMKTAADSGRLPTGSGADISIDKRLPMGGGLGGGSSNAATVLVALNHLWQCGLSMDELAEMGLTLGADVPVFVRGHAAFAEGVGEILTPVDPPEKWYLVAHPGVSIPTPVIFKDPELPRNTPKRSIETLLKCEFSNDCEVIARKRFREVDAVLSWLLEYAPSRLTGTGACVFAEFDTESEARQVLEQAPEWLNGFVAKGVNLSPLHRAML.

Residue K10 is part of the active site. 99–109 (PMGGGLGGGSS) contributes to the ATP binding site. D141 is an active-site residue.

This sequence belongs to the GHMP kinase family. IspE subfamily. As to quaternary structure, homodimer.

The catalysed reaction is 4-CDP-2-C-methyl-D-erythritol + ATP = 4-CDP-2-C-methyl-D-erythritol 2-phosphate + ADP + H(+). It participates in isoprenoid biosynthesis; isopentenyl diphosphate biosynthesis via DXP pathway; isopentenyl diphosphate from 1-deoxy-D-xylulose 5-phosphate: step 3/6. Its function is as follows. Catalyzes the phosphorylation of the position 2 hydroxy group of 4-diphosphocytidyl-2C-methyl-D-erythritol. The chain is 4-diphosphocytidyl-2-C-methyl-D-erythritol kinase from Escherichia coli O9:H4 (strain HS).